We begin with the raw amino-acid sequence, 215 residues long: Tricarboxylate transporter ALT9 (215 aa).

Solcar repeat units lie at residues 18–106 (TTVV…LAPM) and 111–197 (CGVS…VVRL). A run of 3 helical transmembrane segments spans residues 19–39 (TVVG…VLVL), 112–132 (GVST…YCTM), and 182–202 (VAGA…GFLV).

The protein belongs to the mitochondrial carrier (TC 2.A.29) family.

Its subcellular location is the mitochondrion inner membrane. It functions in the pathway mycotoxin biosynthesis. Tricarboxylate transporter; part of the gene cluster that mediates the biosynthesis of the host-selective toxins (HSTs) AAL-toxins, sphinganine-analog mycotoxins responsible for Alternaria stem canker on tomato by the tomato pathotype. The biosynthesis starts with the polyketide synthase ALT1-catalyzed C-16 carbon chain assembly from one starter acetyl-CoA unit with malonyl-CoA extender units. ALT1 also selectively transfers methyl groups at the first and the third cycle of chain elongation for AAL toxin. The C-16 polyketide chain is released from the enzyme by a nucleophilic attack of a carbanion, which is derived from R-carbon of glycin by decarboxylation, on the carbonyl carbon of polyketide acyl chain. This step is probably catalyzed by a pyridoxal 5'-phosphate-dependent aminoacyl transferase ALT4. The respective functions of the other enzymes encoded by the cluster have still to be elucidated. The sphingosine N-acyltransferase-like protein ALT7 seems not to act as a resistance/self-tolerance factor against the toxin in the toxin biosynthetic gene cluster, contrary to what is expected. This is Tricarboxylate transporter ALT9 from Alternaria alternata (Alternaria rot fungus).